Consider the following 38-residue polypeptide: Photosystem II reaction center protein L (38 aa).

Residues 17 to 37 form a helical membrane-spanning segment; that stretch reads SLYWGLLLIFVLAILFSSYIF.

Belongs to the PsbL family. As to quaternary structure, PSII is composed of 1 copy each of membrane proteins PsbA, PsbB, PsbC, PsbD, PsbE, PsbF, PsbH, PsbI, PsbJ, PsbK, PsbL, PsbM, PsbT, PsbX, PsbY, PsbZ, Psb30/Ycf12, at least 3 peripheral proteins of the oxygen-evolving complex and a large number of cofactors. It forms dimeric complexes.

The protein localises to the plastid. It is found in the chloroplast thylakoid membrane. In terms of biological role, one of the components of the core complex of photosystem II (PSII). PSII is a light-driven water:plastoquinone oxidoreductase that uses light energy to abstract electrons from H(2)O, generating O(2) and a proton gradient subsequently used for ATP formation. It consists of a core antenna complex that captures photons, and an electron transfer chain that converts photonic excitation into a charge separation. This subunit is found at the monomer-monomer interface and is required for correct PSII assembly and/or dimerization. The polypeptide is Photosystem II reaction center protein L (Mesostigma viride (Green alga)).